The primary structure comprises 637 residues: Threonine--tRNA ligase (637 aa).

The TGS domain maps to 1-61 (MPNVKLPDGN…KEDCSLIIVT (61 aa)). The catalytic stretch occupies residues 242–533 (DHRKLGKALD…LIEHYAGKLP (292 aa)). Cys333, His384, and His510 together coordinate Zn(2+).

This sequence belongs to the class-II aminoacyl-tRNA synthetase family. As to quaternary structure, homodimer. The cofactor is Zn(2+).

The protein resides in the cytoplasm. The catalysed reaction is tRNA(Thr) + L-threonine + ATP = L-threonyl-tRNA(Thr) + AMP + diphosphate + H(+). Its function is as follows. Catalyzes the attachment of threonine to tRNA(Thr) in a two-step reaction: L-threonine is first activated by ATP to form Thr-AMP and then transferred to the acceptor end of tRNA(Thr). Also edits incorrectly charged L-seryl-tRNA(Thr). The polypeptide is Threonine--tRNA ligase (Legionella pneumophila (strain Corby)).